The following is a 123-amino-acid chain: UPF0102 protein Pcar_2217 (123 aa).

It belongs to the UPF0102 family.

This is UPF0102 protein Pcar_2217 from Syntrophotalea carbinolica (strain DSM 2380 / NBRC 103641 / GraBd1) (Pelobacter carbinolicus).